Here is a 165-residue protein sequence, read N- to C-terminus: Nucleotide-binding protein P9215_05621 (165 aa).

It belongs to the YajQ family.

In terms of biological role, nucleotide-binding protein. The sequence is that of Nucleotide-binding protein P9215_05621 from Prochlorococcus marinus (strain MIT 9215).